A 1102-amino-acid polypeptide reads, in one-letter code: MDKEIYCGSVPVSYFDPFDLFESLRPEFQQILPLDNIHWKAFDGTVRTVNRLPIELIPEGRGEADKSNDEQPFIRFLIVNCISIDQYRAKVRPLVRQWLPNLESVSSSTGEKMIYKPIILLYANSEVVDSNLFKSVSLMEKFGKDFPHVQTLEVRSVYRSPKERQEFWNQFSQKIKASVLSIFQKRLTHLQHSLANLQKGNNFEEQLLTREKLYELYVVFNILEDASLELQKIKKEILRRNMNMPDGKLQVPFESSSKSDESLGSIIIEGTLDKFQLHKYFFIRRLRLLKLEDQTLTAFVGAFQLIKNFIESISIEYRKSVRLLEFKHYFITSMLSYFEFENVSNPLLCEIKAELLMLKRDNWVQGVMATSGYRLMDKNYPNSDVKYKFDLLKETFVDETVFQENFLTLTKEILSLFNKCEGKRQRIVDILSIEIGLLYYQGKKYEEAVSLFLSCYEYYTQTNWNSIGLKILQVFIDSLSHCPKLDVLQIDGESVSASAVLTNAFLNILKLCKDNDSKEIWWKKFMDLQMKNNIHLMYPLDGLFEVTLNSKVHLARANVSAIEVNLKSYGFPEDISTKTMRLSLKNMGGDVIVFGASDFLLKKGENKLILECRDIMYGEFSLLSFEIIVEGITFVKEFPENQDEFIVVPEIYCKESTKVLVKQAHNLNLGEYALELKSVQSDALESLQVEVEVQKNIGNMKNLPVSFSMDEIQARKRYNTPFENVRLEYYLLDQITAFDLIIKTSFTKKNDQGTFGETKKVRIQCYLQLSVSVEDIFKKDIFFFKFLLNSSVREEPVILYSSELSAPDTRNDYNIRGDYIATTPALITFDGNESFINCYEITANNNFDSKDIFNLKVRYNTLKEQLDCFITDAVLIEGDVEWFILFEKWKTFWELEILKKLKYDYDAFKENRIIRLLKTSIDLNKTKSKIRNLCIEKAVLDKILICLNKVSRGIAVCNTDMDEYVRNLVPKQLTVPVQLPGFEQFFHVQFEQMETSHDALHDTIATIGNSLSYTVIVENLSGQWGQDVIDDGGYIFEILSSNEWLIHGQKRCAIKEKRKEFEVHLIPLKKGYLNFPRVEITNINGKSCRVDHSNAFESILIF.

This sequence belongs to the TMEM1 family. In terms of assembly, part of the multisubunit TRAPP (transport protein particle) II complex composed of BET3, BET5, TRS20, TRS23, TRS31, TRS33, TRS65, TRS120 and TRS130. Interacts with YPT31 and YPT32.

It is found in the golgi apparatus. In terms of biological role, specific subunit of the TRAPP II complex, a highly conserved vesicle tethering complex that functions in the late Golgi as a guanine nucleotide exchange factor (GEF) for the Golgi YPT1 GTPase. TRS130 plays a role in the YPT GEF activity of TRAPP II in concert with the two other TRAPP II-specific subunits TRS65 and TRS120. Required for both the cytoplasm-to-vacuole targeting (Cvt) pathway and starvation-induced autophagy through its role in ATG8 and ATG9 trafficking. This Saccharomyces cerevisiae (strain ATCC 204508 / S288c) (Baker's yeast) protein is Trafficking protein particle complex II-specific subunit 130 (TRS130).